The primary structure comprises 44 residues: Antibacterial protein 3 (44 aa).

M1 is modified (N-formylmethionine).

This sequence belongs to the staphylococcal hemolytic protein family.

It localises to the secreted. Has hemolytic activity and also inhibits the growth of gonococci. In Staphylococcus haemolyticus, this protein is Antibacterial protein 3.